The sequence spans 230 residues: Ribonuclease 3 (230 aa).

Residues D10–S133 enclose the RNase III domain. E46 contacts Mg(2+). D50 is a catalytic residue. The Mg(2+) site is built by D119 and E122. Residue E122 is part of the active site. In terms of domain architecture, DRBM spans D161–Q230.

The protein belongs to the ribonuclease III family. In terms of assembly, homodimer. Requires Mg(2+) as cofactor.

Its subcellular location is the cytoplasm. It carries out the reaction Endonucleolytic cleavage to 5'-phosphomonoester.. In terms of biological role, digests double-stranded RNA. Involved in the processing of primary rRNA transcript to yield the immediate precursors to the large and small rRNAs (23S and 16S). Processes some mRNAs, and tRNAs when they are encoded in the rRNA operon. Processes pre-crRNA and tracrRNA of type II CRISPR loci if present in the organism. The chain is Ribonuclease 3 (rnc) from Acinetobacter baumannii (strain AB307-0294).